A 105-amino-acid chain; its full sequence is Large ribosomal subunit protein eL30 (105 aa).

This sequence belongs to the eukaryotic ribosomal protein eL30 family.

The protein is Large ribosomal subunit protein eL30 (rpl30e) of Methanococcus vannielii (strain ATCC 35089 / DSM 1224 / JCM 13029 / OCM 148 / SB).